A 315-amino-acid polypeptide reads, in one-letter code: Rhomboid-related protein 4 (315 aa).

At 1–21 (MQRRSRGINTGLILLLSQIFH) the chain is on the cytoplasmic side. The chain crosses the membrane as a helical span at residues 22-42 (VGINNIPPVTLATLALNIWFF). The Extracellular portion of the chain corresponds to 43-106 (LNPQKPLYSS…RRLGSRWFAY (64 aa)). A helical transmembrane segment spans residues 107 to 127 (VITAFSVLTGVVYLLLQFAVA). At 128–138 (EFMDEPDFKRS) the chain is on the cytoplasmic side. The helical transmembrane segment at 139–157 (CAVGFSGVLFALKVLNNHY) threads the bilayer. Residue Ser-144 is the Nucleophile of the active site. Residues 158 to 180 (CPGGFVNILGFPVPNRFACWVEL) lie on the Extracellular side of the membrane. A helical transmembrane segment spans residues 181-201 (VAIHLFSPGTSFAGHLAGILV). The active site involves His-195. Residues 202–315 (GLMYTQGPLK…RQRLHRFDSQ (114 aa)) lie on the Cytoplasmic side of the membrane. The tract at residues 269 to 284 (SEEEQLERALQASLWD) is ubiquitin-binding domain (UBD). The interval 283–315 (WDRGNTRNSPPPYGFHLSPEEMRRQRLHRFDSQ) is disordered. The span at 300–315 (SPEEMRRQRLHRFDSQ) shows a compositional bias: basic and acidic residues. Positions 301 to 315 (PEEMRRQRLHRFDSQ) are VCP/p97-interacting motif (VIM).

This sequence belongs to the peptidase S54 family. Interacts (via C-terminal domain) with VCP. Interacts with ubiquitin and ubiquitinated proteins. Interacts with BIK and STEAP3. Expressed strongly in testis.

It is found in the endoplasmic reticulum membrane. The protein resides in the mitochondrion membrane. It catalyses the reaction Cleaves type-1 transmembrane domains using a catalytic dyad composed of serine and histidine that are contributed by different transmembrane domains.. With respect to regulation, inhibited by aprotinin. Intramembrane-cleaving serine protease that cleaves single transmembrane or multi-pass membrane proteins in the hydrophobic plane of the membrane, luminal loops and juxtamembrane regions. Involved in regulated intramembrane proteolysis and the subsequent release of functional polypeptides from their membrane anchors. Functional component of endoplasmic reticulum-associated degradation (ERAD) for misfolded membrane proteins. Required for the degradation process of some specific misfolded endoplasmic reticulum (ER) luminal proteins. Participates in the transfer of misfolded proteins from the ER to the cytosol, where they are destroyed by the proteasome in a ubiquitin-dependent manner. Functions in BIK, MPZ, PKD1, PTCRA, RHO, STEAP3 and TRAC processing. Involved in the regulation of exosomal secretion; inhibits the TSAP6-mediated secretion pathway. Involved in the regulation of apoptosis; modulates BIK-mediated apoptotic activity. Also plays a role in the regulation of spermatogenesis; inhibits apoptotic activity in spermatogonia. This chain is Rhomboid-related protein 4 (RHBDD1), found in Homo sapiens (Human).